Here is a 213-residue protein sequence, read N- to C-terminus: 3,4-dihydroxy-2-butanone 4-phosphate synthase (213 aa).

D-ribulose 5-phosphate is bound by residues 37–38, Asp-42, 150–154, and Glu-174; these read RE and RAGHT. Residue Glu-38 participates in Mg(2+) binding. His-153 is a Mg(2+) binding site.

Belongs to the DHBP synthase family. In terms of assembly, homodimer. Requires Mg(2+) as cofactor. The cofactor is Mn(2+).

The enzyme catalyses D-ribulose 5-phosphate = (2S)-2-hydroxy-3-oxobutyl phosphate + formate + H(+). The protein operates within cofactor biosynthesis; riboflavin biosynthesis; 2-hydroxy-3-oxobutyl phosphate from D-ribulose 5-phosphate: step 1/1. Functionally, catalyzes the conversion of D-ribulose 5-phosphate to formate and 3,4-dihydroxy-2-butanone 4-phosphate. This Wigglesworthia glossinidia brevipalpis protein is 3,4-dihydroxy-2-butanone 4-phosphate synthase.